Here is a 662-residue protein sequence, read N- to C-terminus: Transforming growth factor beta activator LRRC32 (662 aa).

Residues 1–17 form the signal peptide; sequence MRPQILLLLALLTLGLA. At 18 to 625 the chain is on the extracellular side; the sequence is AQRQDKVPCK…EDCEKGGLKN (608 aa). The 28-residue stretch at 21–48 folds into the LRRNT domain; that stretch reads QDKVPCKMVDKKVSCQGLGLLQVPSVLP. LRR repeat units follow at residues 50 to 73, 74 to 95, 98 to 119, 125 to 145, 150 to 171, 174 to 195, 198 to 219, 220 to 240, 244 to 265, and 266 to 286; these read DTETLDLSGNQLRSILASPLGFYT, ALRHLDLSTNEISFLQPGAFQA, HLEHLSLAHNRLAMATALSAGG, RVTSLDLSGNSLYSGLLERLL, SLHTLSLAENSLTRLTRHTFRD, VLEQLDLHSNVLMDIEDGAFEG, RLTHLNLSRNSLTCISDFSLQQ, LRVLDLSCNSIEAFQTASQPQ, QLTWLDLRENKLLHFPDLAALP, and RLIYLNLSNNLIRLPTGPPQD. A glycan (N-linked (GlcNAc...) asparagine) is linked at N203. N-linked (GlcNAc...) asparagine glycosylation is found at N271 and N308. 10 LRR repeats span residues 316-339, 340-361, 364-385, 387-408, 411-432, 444-465, 467-488, 492-513, 515-536, and 537-558; these read QLLNLDLSYNEIELIPDSFLEHLT, SLCFLNLSRNCLRTFEARRSGS, CLMLLDLSHNALETLELGARAL, SLRTLLLQGNALRDLPPYTFAN, SLQRLNLQGNRVSPCGGPDEPG, SLHSLSLVDNEIELLRAGAFLH, PLTELDLSSNPGLEVATGALGG, SLEVLALQGNGLTVLQVDLPCF, CLKRLNLAENRLSHLPAWTQAV, and SLEVLDLRNNSFSLLPGSAMGG. An N-linked (GlcNAc...) asparagine glycan is attached at N345. N-linked (GlcNAc...) asparagine glycosylation occurs at N545. One can recognise an LRRCT domain in the interval 571–620; the sequence is NPLSCCGNGWLAAQLHQGRVDVDATQDLICRFSSQEEVSLSHVRPEDCEK. The chain crosses the membrane as a helical span at residues 626-646; it reads INLIIILTFILVSAILLTTLA. Over 647–662 the chain is Cytoplasmic; sequence TCCCVRRQKFNQQYKA.

Belongs to the LRRC32/LRRC33 family. In terms of assembly, interacts with TGFB1; associates via disulfide bonds with the Latency-associated peptide chain (LAP) regulatory chain of TGFB1, leading to regulate activation of TGF-beta-1. Interacts with TGFB2. Interacts with TGFB3; associates via disulfide bonds with the Latency-associated peptide chain (LAP) regulatory chain of TGFB3, leading to regulate activation of TGF-beta-3. Interacts with LAPTM4B; decreases TGFB1 production in regulatory T-cells.

It localises to the cell membrane. The protein resides in the cell surface. Key regulator of transforming growth factor beta (TGFB1, TGFB2 and TGFB3) that controls TGF-beta activation by maintaining it in a latent state during storage in extracellular space. Associates specifically via disulfide bonds with the Latency-associated peptide (LAP), which is the regulatory chain of TGF-beta, and regulates integrin-dependent activation of TGF-beta. Able to outcompete LTBP1 for binding to LAP regulatory chain of TGF-beta. Controls activation of TGF-beta-1 (TGFB1) on the surface of activated regulatory T-cells (Tregs). Required for epithelial fusion during palate development by regulating activation of TGF-beta-3 (TGFB3). This is Transforming growth factor beta activator LRRC32 from Pongo abelii (Sumatran orangutan).